We begin with the raw amino-acid sequence, 166 residues long: Phospholipase A2 inhibitor clone 04 (166 aa).

Positions 1 to 19 are cleaved as a signal peptide; that stretch reads MRLILLSSLLLLGIFLANG. The C-type lectin domain maps to 46–161; the sequence is LKDAFLTVHR…CDDNRLVVCE (116 aa). Cystine bridges form between cysteine 83-cysteine 160 and cysteine 138-cysteine 152. The N-linked (GlcNAc...) asparagine glycan is linked to asparagine 122.

It belongs to the alpha-type phospholipase A2 inhibitor family. As to quaternary structure, homotrimer; non-covalently linked. In terms of tissue distribution, expressed by the liver.

The protein resides in the secreted. Its function is as follows. This phospholipase A2 inhibitor binds directly phospholipase A2 in the presence or absence of calcium. In Bothrops moojeni (Lance-headed viper), this protein is Phospholipase A2 inhibitor clone 04.